Reading from the N-terminus, the 138-residue chain is MLQPKRTKYRKPHNVSYEGKAKGNSYVAFGEYGIMATNGAWIDARQIESARIAISKQLGKTGKMWIRIFPHMSKTKKPLEVRMGSGKGNPEFWVAVVKEGTVMFEVANIPEAQMKEALTRAGHKLGVTWKIVARQGAQ.

Belongs to the universal ribosomal protein uL16 family. In terms of assembly, part of the 50S ribosomal subunit.

Binds 23S rRNA and is also seen to make contacts with the A and possibly P site tRNAs. The polypeptide is Large ribosomal subunit protein uL16 (Mycoplasmoides gallisepticum (strain R(low / passage 15 / clone 2)) (Mycoplasma gallisepticum)).